The following is a 342-amino-acid chain: Central glycolytic genes regulator (342 aa).

A DNA-binding region (H-T-H motif) is located at residues 37–56 (RRNLAVSLGLTERVLRSEVT).

This sequence belongs to the SorC transcriptional regulatory family. In terms of assembly, homotetramer.

In the absence of glucose, represses the transcription of the gapA operon, which encodes five key glycolytic enzymes. This is Central glycolytic genes regulator (cggR) from Priestia megaterium (strain DSM 319 / IMG 1521) (Bacillus megaterium).